The following is a 388-amino-acid chain: Protein TsgA homolog (388 aa).

The next 12 membrane-spanning stretches (helical) occupy residues 12–32, 51–71, 77–97, 102–122, 137–157, 163–183, 203–223, 246–266, 272–292, 294–314, 331–351, and 356–376; these read CISF…GIFL, TFLN…TNII, LIFG…SHNL, ISMF…TYII, LTDS…ALII, WYWV…ITIN, FSIL…LSFI, SAFW…LKFF, IITL…FYDY, LLYI…TIII, YILT…GPIV, and IFSA…LVII.

The protein belongs to the major facilitator superfamily. TsgA family.

It is found in the cell membrane. The protein is Protein TsgA homolog of Buchnera aphidicola subsp. Baizongia pistaciae (strain Bp).